We begin with the raw amino-acid sequence, 675 residues long: Vitamin K-dependent protein S (675 aa).

The N-terminal stretch at 1-24 is a signal peptide; it reads MRVLSARFRVLLACLALVIPVSET. The propeptide occupies 25-41; the sequence is NFLSKERASQVLVRKRR. Residues 42–87 form the Gla domain; it reads ANTLFEETMKGNLERECIEELCNKEEAREVFENNPETDYFYPKYLG. Residues Glu47, Glu48, Glu55, Glu57, Glu60, Glu61, Glu66, Glu67, Glu70, Glu73, and Glu77 each carry the 4-carboxyglutamate modification. The cysteines at positions 58 and 63 are disulfide-linked. Positions 88–116 are thrombin-sensitive; that stretch reads CLGAFRVGSFHAARQSANAYPDLRSCVKA. One can recognise an EGF-like 1 domain in the interval 117-155; sequence ISDQCDPIPCNEDGYLACQDGQAAFTCFCKPGWQGDRCQ. Disulfide bonds link Cys121–Cys134, Cys126–Cys143, Cys145–Cys154, Cys161–Cys175, Cys171–Cys184, Cys186–Cys199, Cys205–Cys217, Cys212–Cys226, Cys228–Cys241, Cys247–Cys256, Cys252–Cys265, Cys267–Cys282, and Cys449–Cys475. (3R)-3-hydroxyaspartate is present on Asp136. Residues 157–200 enclose the EGF-like 2; calcium-binding domain; that stretch reads DVNECKDPSNVNGGCSQICDNTPGSYHCSCKRGFAMLPNKKDCK. The 42-residue stretch at 201-242 folds into the EGF-like 3; calcium-binding domain; that stretch reads DLDECALKPSVCGTAVCKNIPGDFECECPDGYRYDPSSKSCK. Residues 243–283 enclose the EGF-like 4; calcium-binding domain; sequence DVDECSENMCAQLCVNFPGGYSCYCDGKKGFKLAQDQKSCE. 2 consecutive Laminin G-like domains span residues 299–475 and 484–665; these read LLYL…NKHC and YYPG…AHSC. N-linked (GlcNAc...) asparagine glycosylation is found at Asn499 and Asn509. A disulfide bond links Cys638 and Cys665.

Post-translationally, the iron and 2-oxoglutarate dependent 3-hydroxylation of aspartate and asparagine is (R) stereospecific within EGF domains. Plasma.

It is found in the secreted. Functionally, anticoagulant plasma protein; it is a cofactor to activated protein C in the degradation of coagulation factors Va and VIIIa. It helps to prevent coagulation and stimulating fibrinolysis. In Mus musculus (Mouse), this protein is Vitamin K-dependent protein S (Pros1).